The following is a 404-amino-acid chain: Adenylosuccinate synthetase (404 aa).

Residues glycine 12 to lysine 18 and glycine 40 to threonine 42 contribute to the GTP site. Residue aspartate 13 is the Proton acceptor of the active site. 2 residues coordinate Mg(2+): aspartate 13 and glycine 40. IMP is bound by residues aspartate 13–lysine 16, asparagine 38–histidine 41, threonine 121, arginine 135, glutamine 213, threonine 228, and arginine 296. The Proton donor role is filled by histidine 41. Threonine 292–arginine 298 serves as a coordination point for substrate. Residues arginine 298, lysine 324–aspartate 326, and serine 389–glycine 391 contribute to the GTP site.

This sequence belongs to the adenylosuccinate synthetase family. As to quaternary structure, homodimer. Mg(2+) serves as cofactor.

The protein resides in the cytoplasm. It catalyses the reaction IMP + L-aspartate + GTP = N(6)-(1,2-dicarboxyethyl)-AMP + GDP + phosphate + 2 H(+). The protein operates within purine metabolism; AMP biosynthesis via de novo pathway; AMP from IMP: step 1/2. Plays an important role in the de novo pathway of purine nucleotide biosynthesis. Catalyzes the first committed step in the biosynthesis of AMP from IMP. The protein is Adenylosuccinate synthetase of Deinococcus geothermalis (strain DSM 11300 / CIP 105573 / AG-3a).